The primary structure comprises 260 residues: Pyridoxine 5'-phosphate synthase (260 aa).

Residues Asn-10 and Arg-21 each contribute to the 3-amino-2-oxopropyl phosphate site. The active-site Proton acceptor is His-46. 1-deoxy-D-xylulose 5-phosphate contacts are provided by Arg-48 and His-53. The Proton acceptor role is filled by Glu-76. Thr-113 contacts 1-deoxy-D-xylulose 5-phosphate. The active-site Proton donor is His-204. 3-amino-2-oxopropyl phosphate-binding positions include Asp-205 and 227–228 (GH).

This sequence belongs to the PNP synthase family. As to quaternary structure, homooctamer; tetramer of dimers.

Its subcellular location is the cytoplasm. It carries out the reaction 3-amino-2-oxopropyl phosphate + 1-deoxy-D-xylulose 5-phosphate = pyridoxine 5'-phosphate + phosphate + 2 H2O + H(+). Its pathway is cofactor biosynthesis; pyridoxine 5'-phosphate biosynthesis; pyridoxine 5'-phosphate from D-erythrose 4-phosphate: step 5/5. Catalyzes the complicated ring closure reaction between the two acyclic compounds 1-deoxy-D-xylulose-5-phosphate (DXP) and 3-amino-2-oxopropyl phosphate (1-amino-acetone-3-phosphate or AAP) to form pyridoxine 5'-phosphate (PNP) and inorganic phosphate. The polypeptide is Pyridoxine 5'-phosphate synthase (Xylella fastidiosa (strain M12)).